We begin with the raw amino-acid sequence, 144 residues long: UPF0735 ACT domain-containing protein LCABL_12100 (144 aa).

The region spanning 68–143 (VISLMLHHDR…GVSDVHLVSV (76 aa)) is the ACT domain.

It belongs to the UPF0735 family.

This chain is UPF0735 ACT domain-containing protein LCABL_12100, found in Lacticaseibacillus casei (strain BL23) (Lactobacillus casei).